The sequence spans 77 residues: Apelin (77 aa).

The N-terminal stretch at 1–22 is a signal peptide; the sequence is MNLRLCVQALLLLWLSLTAVCG. A propeptide spanning residues 23 to 41 is cleaved from the precursor; the sequence is VPLMLPPDGTGLEEGSMRY. Residues 46-77 are disordered; sequence RTSRTGPGAWQGGRRKFRRQRPRLSHKGPMPF. Residues 58 to 71 show a composition bias toward basic residues; sequence GRRKFRRQRPRLSH.

Belongs to the apelin family. In terms of processing, several active peptides may be produced by proteolytic processing of the peptide precursor. Expressed in extraembryonic visceral endoderm and in the primitive streak at 6.5 and 7.5 dpc. Expressed in the anterior visceral yolk sac at 8.25 dpc. Expressed weakly in the embryonic heart at 11.5 dpc. Expressed in the adult heart. Expressed in endothelial cells and cardiomyocytes and weakly expressed in fibroblasts.

Its subcellular location is the secreted. It localises to the extracellular space. Peptide hormone that functions as endogenous ligand for the G-protein-coupled apelin receptor (APLNR/APJ). Functions as a balanced agonist activating both G(i) protein pathway and beta-arrestin pathway of APLNR. Downstream G proteins activation, apelin can inhibit cAMP production and activate key intracellular effectors such as ERKs. On the other hand, APLNR activation induces beta-arrestin recruitment to the membrane leading to desensitization and internalization of the receptor. Apelin also blunts mechanical stretch-induced hypertrophic induction from APLNR. Apelin-36 dissociates more hardly than (pyroglu)apelin-13 from APLNR. Involved in the regulation of cardiac precursor cell movements during gastrulation and heart morphogenesis. Has an inhibitory effect on cytokine production in response to T-cell receptor/CD3 cross-linking; the oral intake of apelin in the colostrum and the milk might therefore modulate immune responses in neonates. Plays a role in early coronary blood vessels formation. Mediates myocardial contractility in an ERK1/2-dependent manner. May also have a role in the central control of body fluid homeostasis by influencing vasopressin release and drinking behavior. The sequence is that of Apelin from Mus musculus (Mouse).